Here is a 943-residue protein sequence, read N- to C-terminus: Isoleucine--tRNA ligase 1 (943 aa).

The 'HIGH' region motif lies at 58-68 (PYANGTIHIGH). Glutamate 567 contributes to the L-isoleucyl-5'-AMP binding site. The short motif at 608-612 (KMSKS) is the 'KMSKS' region element. An ATP-binding site is contributed by lysine 611. Cysteine 906, cysteine 909, cysteine 926, and cysteine 929 together coordinate Zn(2+).

The protein belongs to the class-I aminoacyl-tRNA synthetase family. IleS type 1 subfamily. As to quaternary structure, monomer. The cofactor is Zn(2+).

Its subcellular location is the cytoplasm. The catalysed reaction is tRNA(Ile) + L-isoleucine + ATP = L-isoleucyl-tRNA(Ile) + AMP + diphosphate. In terms of biological role, catalyzes the attachment of isoleucine to tRNA(Ile). As IleRS can inadvertently accommodate and process structurally similar amino acids such as valine, to avoid such errors it has two additional distinct tRNA(Ile)-dependent editing activities. One activity is designated as 'pretransfer' editing and involves the hydrolysis of activated Val-AMP. The other activity is designated 'posttransfer' editing and involves deacylation of mischarged Val-tRNA(Ile). Its function is as follows. Confers resistance to the antibiotic mupirocin (pseudomonic acid A), an Ile-analog produced by P.fluorescens NCIMB 10586 itself that competitively inhibits activation by Ile-tRNA synthetase, thus inhibiting protein biosynthesis. The sequence is that of Isoleucine--tRNA ligase 1 (ileS1) from Pseudomonas fluorescens.